A 140-amino-acid polypeptide reads, in one-letter code: Large ribosomal subunit protein uL22 (140 aa).

The tract at residues 115–140 (AKPAAAKKDPKAAAAKADANAGTKEG) is disordered.

This sequence belongs to the universal ribosomal protein uL22 family. As to quaternary structure, part of the 50S ribosomal subunit.

Functionally, this protein binds specifically to 23S rRNA; its binding is stimulated by other ribosomal proteins, e.g. L4, L17, and L20. It is important during the early stages of 50S assembly. It makes multiple contacts with different domains of the 23S rRNA in the assembled 50S subunit and ribosome. In terms of biological role, the globular domain of the protein is located near the polypeptide exit tunnel on the outside of the subunit, while an extended beta-hairpin is found that lines the wall of the exit tunnel in the center of the 70S ribosome. This is Large ribosomal subunit protein uL22 from Heliobacterium modesticaldum (strain ATCC 51547 / Ice1).